The following is a 341-amino-acid chain: 4-hydroxy-2-oxovalerate aldolase (341 aa).

The region spanning 5-257 (ITLHDMTLRD…ETGVDVFRIA (253 aa)) is the Pyruvate carboxyltransferase domain. A substrate-binding site is contributed by 13 to 14 (RD). Aspartate 14 is a Mn(2+) binding site. Catalysis depends on histidine 17, which acts as the Proton acceptor. Residues serine 167 and histidine 196 each coordinate substrate. Residues histidine 196 and histidine 198 each coordinate Mn(2+). Substrate is bound at residue tyrosine 287.

The protein belongs to the 4-hydroxy-2-oxovalerate aldolase family.

The enzyme catalyses (S)-4-hydroxy-2-oxopentanoate = acetaldehyde + pyruvate. This is 4-hydroxy-2-oxovalerate aldolase (mhpE) from Cupriavidus taiwanensis (strain DSM 17343 / BCRC 17206 / CCUG 44338 / CIP 107171 / LMG 19424 / R1) (Ralstonia taiwanensis (strain LMG 19424)).